Reading from the N-terminus, the 569-residue chain is Urease subunit beta (569 aa).

The Urease domain maps to 131-569; it reads GGIDTHIHFI…VSLGQLYCLF (439 aa). Ni(2+) contacts are provided by H136, H138, and K219. K219 bears the N6-carboxylysine mark. Substrate is bound at residue H221. Ni(2+) contacts are provided by H248 and H274. The active-site Proton donor is the H322. A Ni(2+)-binding site is contributed by D362.

This sequence belongs to the metallo-dependent hydrolases superfamily. Urease alpha subunit family. In terms of assembly, heterohexamer of 3 UreA (alpha) and 3 UreB (beta) subunits. Ni cation is required as a cofactor. Carboxylation allows a single lysine to coordinate two nickel ions.

The protein localises to the cytoplasm. It catalyses the reaction urea + 2 H2O + H(+) = hydrogencarbonate + 2 NH4(+). Its pathway is nitrogen metabolism; urea degradation; CO(2) and NH(3) from urea (urease route): step 1/1. The sequence is that of Urease subunit beta from Helicobacter hepaticus (strain ATCC 51449 / 3B1).